The chain runs to 614 residues: Zinc finger protein 276 (614 aa).

The tract at residues 1–46 (MKRDRLGRFLSPGIARQRGGSGGGCGSGRTRGRPSRSGGTSADGAA) is disordered. A compositionally biased stretch (gly residues) spans 19-29 (GGSGGGCGSGR). In terms of domain architecture, ZAD spans 78-164 (GHCRLCHGKF…LQRVNVSPAG (87 aa)). Residues Cys-80, Cys-83, Cys-137, and Cys-140 each contribute to the Zn(2+) site. The segment at 271–422 (RLAQNSESNP…PGPKPGWKKK (152 aa)) is disordered. 2 stretches are compositionally biased toward polar residues: residues 272–282 (LAQNSESNPTG) and 291–302 (RETQVGSETKTL). Positions 357–369 (SDLSEGDFLSEDE) are enriched in acidic residues. Residues 386–408 (YPEKKVSGKKSEGREAKRPEEPK) are compositionally biased toward basic and acidic residues. Positions 409 to 422 (IRKKPGPKPGWKKK) are enriched in basic residues. 5 consecutive C2H2-type zinc fingers follow at residues 434 to 458 (YKCP…IKEH), 465 to 490 (RPCP…KLIH), 496 to 518 (YICD…QMRH), 524 to 546 (LQCE…MTKH), and 554 to 577 (FACD…SMVH). Residues 588-614 (PLEAEPPPGPLSPSGTMEGQAVKPEPT) are disordered.

In terms of tissue distribution, found in all the examined tissues, with highest levels in kidney, liver, lung, and spleen.

It is found in the nucleus. It localises to the chromosome. The protein resides in the centromere. Its subcellular location is the kinetochore. Functionally, may be involved in transcriptional regulation. This Mus musculus (Mouse) protein is Zinc finger protein 276 (Znf276).